A 148-amino-acid polypeptide reads, in one-letter code: UPF0260 protein mll2411 (148 aa).

The protein belongs to the UPF0260 family.

This chain is UPF0260 protein mll2411, found in Mesorhizobium japonicum (strain LMG 29417 / CECT 9101 / MAFF 303099) (Mesorhizobium loti (strain MAFF 303099)).